Consider the following 1054-residue polypeptide: NACHT, LRR and PYD domains-containing protein 12 (1054 aa).

The Pyrin domain maps to 1–95 (MLPSTARDGL…WERGQGEDLV (95 aa)). The FISNA domain maps to 129-201 (YKDYVRRKFQ…SPIQMETLFE (73 aa)). Residues 211 to 528 (HTVVLQGAAG…EFFAAMYCAL (318 aa)) form the NACHT domain. An ATP-binding site is contributed by 217–224 (GAAGMGKS). LRR repeat units follow at residues 821-841 (YLVELDLTGNPLEDSGLKLLC), 850-871 (RLRTLWLKICHLGQASCEDLAS), 878-899 (SLLELDLGLNDLGDSGVLLLCE), 907-928 (KLQTLRLGICRLGSVACVGIAS), 935-955 (CLQELDLSFNDLGDRGLQLLG), 964-985 (RLQKLWLDNCGLTSKACEDLSS), 992-1013 (TLHELYLTNNALGDTGVCLLCK), and 1021-1042 (KLRVLWLFGMDLNKKTHRRMAA).

It belongs to the NLRP family. As to quaternary structure, interacts (via pyrin domain) with ASC. Interacts (via pyrin domain) with FAF1 (via UBA domain). Interacts with MAP3K14; this interaction promotes proteasomal degradation of MAP3K14. Interacts with NOD2; this interaction promotes degradation of NOD2 through the ubiquitin-proteasome pathway. Interacts with HSPA1A and HSPA8. Interacts with HSP90AA1. Interacts with TRIM25; this interaction inhibits RIGI-mediated signaling pathway. In terms of tissue distribution, mainly expressed in dendritic cells (DCs) and neutrophils.

It localises to the cytoplasm. Its function is as follows. Plays an essential role as an potent mitigator of inflammation. Primarily expressed in dendritic cells and macrophages, inhibits both canonical and non-canonical NF-kappa-B and ERK activation pathways. Functions as a negative regulator of NOD2 by targeting it to degradation via the proteasome pathway. In turn, promotes bacterial tolerance. Also inhibits the RIGI-mediated immune signaling against RNA viruses by reducing the E3 ubiquitin ligase TRIM25-mediated 'Lys-63'-linked RIGI activation but enhancing the E3 ubiquitin ligase RNF125-mediated 'Lys-48'-linked RIGI degradation. Also acts as a negative regulator of inflammatory response to mitigate obesity and obesity-associated diseases in adipose tissue. This chain is NACHT, LRR and PYD domains-containing protein 12 (Nlrp12), found in Mus musculus (Mouse).